Reading from the N-terminus, the 256-residue chain is Pimeloyl-[acyl-carrier protein] methyl ester esterase (256 aa).

Residues histidine 15–proline 242 enclose the AB hydrolase-1 domain. Substrate contacts are provided by residues tryptophan 22, serine 82–leucine 83, and phenylalanine 143–glutamine 147. Catalysis depends on serine 82, which acts as the Nucleophile. Residues aspartate 207 and histidine 235 contribute to the active site. Position 235 (histidine 235) interacts with substrate.

It belongs to the AB hydrolase superfamily. Carboxylesterase BioH family. Monomer.

It localises to the cytoplasm. The catalysed reaction is 6-carboxyhexanoyl-[ACP] methyl ester + H2O = 6-carboxyhexanoyl-[ACP] + methanol + H(+). The protein operates within cofactor biosynthesis; biotin biosynthesis. Its function is as follows. The physiological role of BioH is to remove the methyl group introduced by BioC when the pimeloyl moiety is complete. It allows to synthesize pimeloyl-ACP via the fatty acid synthetic pathway through the hydrolysis of the ester bonds of pimeloyl-ACP esters. The polypeptide is Pimeloyl-[acyl-carrier protein] methyl ester esterase (Citrobacter koseri (strain ATCC BAA-895 / CDC 4225-83 / SGSC4696)).